A 121-amino-acid polypeptide reads, in one-letter code: Met-lysine-1a (121 aa).

Residues 1–22 (MKSFVFALALIVAFACISESKS) form the signal peptide. A propeptide spanning residues 23 to 69 (DHTGYEEEENLEDSELTDLVTAALLEELAEASEMDDLSYTEEAGGER) is cleaved from the precursor. Methionine 120 bears the Methionine amide mark.

In terms of tissue distribution, expressed by the venom gland.

It localises to the secreted. Its function is as follows. Shows no antimicrobial activity against Gram-positive bacterium B.subtilis B-501 or Gram-negative bacterium E.coli DH5-alpha at concentrations up to 20 ug/ml. Shows no toxicity towards insect (S.carnaria) larvae. The polypeptide is Met-lysine-1a (Lachesana tarabaevi (Spider)).